Here is a 170-residue protein sequence, read N- to C-terminus: Translationally-controlled tumor protein homolog (170 aa).

Residues 1-170 enclose the TCTP domain; it reads MLIYNDILNG…WKHGLKETKV (170 aa).

The protein belongs to the TCTP family.

The protein resides in the cytoplasm. It localises to the cytoskeleton. Its function is as follows. Involved in protein synthesis. Involved in microtubule stabilization. In Gibberella zeae (strain ATCC MYA-4620 / CBS 123657 / FGSC 9075 / NRRL 31084 / PH-1) (Wheat head blight fungus), this protein is Translationally-controlled tumor protein homolog.